The sequence spans 449 residues: Packaging protein 1 (449 aa).

Basic residues predominate over residues 1–10 (MESRGKHRLK). Positions 1-64 (MESRGKHRLK…SSNSILHCPP (64 aa)) are disordered. Basic and acidic residues predominate over residues 11 to 25 (KNGESKENLGEHEQA). Positions 35–59 (SADSLSSPVAEPNFSSPGGRSSNSI) are enriched in polar residues. 168 to 175 (GPTGSGKS) is an ATP binding site. The interval 437–449 (TAYSKKCDKLANK) is DNA-binding.

Belongs to the adenoviridae packaging protein 1 family. Homodimer. Part of a genome packaging complex composed of packaging proteins 1, 2 and 3; this complex specifically binds to the packaging sequence on the left end of viral genomic DNA and performs packaging of the viral genome. Interacts with protein 33K.

It localises to the virion. The protein localises to the host nucleus. It is found in the host nucleoplasm. The protein resides in the host nucleolus. In terms of biological role, component of the packaging machinery which encapsidates the viral DNA into preformed capsids and transcriptional activator of the viral major late promoter (MLP). Binds, along with packaging proteins 2 and 3, to the specific packaging sequence on the left end of viral genomic DNA and displays ATPase activity thereby providing the power stroke of the packaging machinery. The activity of packaging protein IVa2 is stimulated by protein 33K which acts as a terminase. May be the protein that pumps DNA into the capsid powered by ATP hydrolysis. Specifically binds to the 5'-CG-3' nucleotides of the repeats making up the packaging sequence. Component of the DEF-A and DEF-B transcription factors that bind downstream elements of the major late promoter (MLP), and stimulate transcription from the MLP after initiation of viral DNA replication. DEF-A is a heterodimer packaging proteins 1 and 2 and DEF-B is a homodimer of packaging protein 1. The protein is Packaging protein 1 of Mus musculus (Mouse).